A 250-amino-acid polypeptide reads, in one-letter code: MYKLVLMRHGESQWNLENRFTGWTDVDLTETGREQARKAGELLKREGYAFDLAYTSVLKRAIRTLWIALDAMDAMYTPVGINWRLNERHYGQLQGLNKAETAAKYGDEQVLIWRRAYAIAPEPLDLEDPRHPRFDGRYAKIPADQLPATECLKDTVARVLPFWNESIAPAIRAGRRVLVAAHGNSLRALIKHLDNVSDDDIVGVNIPTGQPLVYELDEDLKPIRHYYLGDAAEIEAAMAAVAAQGKAKKD.

Substrate contacts are provided by residues 8–15, 21–22, arginine 60, 87–90, lysine 98, 114–115, and 183–184; these read RHGESQWN, TG, ERHY, RR, and GN. The active-site Tele-phosphohistidine intermediate is histidine 9. The active-site Proton donor/acceptor is the glutamate 87.

It belongs to the phosphoglycerate mutase family. BPG-dependent PGAM subfamily. In terms of assembly, homodimer.

It catalyses the reaction (2R)-2-phosphoglycerate = (2R)-3-phosphoglycerate. Its pathway is carbohydrate degradation; glycolysis; pyruvate from D-glyceraldehyde 3-phosphate: step 3/5. Functionally, catalyzes the interconversion of 2-phosphoglycerate and 3-phosphoglycerate. This Bordetella pertussis (strain Tohama I / ATCC BAA-589 / NCTC 13251) protein is 2,3-bisphosphoglycerate-dependent phosphoglycerate mutase.